A 387-amino-acid chain; its full sequence is uncharacterized protein (387 aa).

Disordered regions lie at residues 1 to 126, 138 to 169, and 275 to 298; these read MDGR…GDDE, GNQG…RNEE, and SSIF…AGNK. A compositionally biased stretch (basic and acidic residues) spans 32–45; the sequence is SSDHRTSNSAESKK. Polar residues-rich tracts occupy residues 49–63 and 78–93; these read SGKS…NNDN and DLSS…SKGT. Over residues 155–169 the composition is skewed to basic and acidic residues; sequence ENGKNDIEKNNRNEE. Residues 275–296 are compositionally biased toward polar residues; it reads SSIFSDSQAVTTDDEGISSTAG.

It belongs to the ThrE exporter (TC 2.A.79) family.

This is an uncharacterized protein from Saccharomyces cerevisiae (strain ATCC 204508 / S288c) (Baker's yeast).